We begin with the raw amino-acid sequence, 200 residues long: MQSSPLLEHLIENLRCLPGVGPKSAQRMAYHLLQRNRSGGMNLARALTEAMSKIGHCSQCRDFTEEDTCNICNNPRRQNSGLLCVVEMPADIQAIEQTGQFSGRYFVLMGHLSPLDGIGPREIGLDLLQKRLVEESFHEVILATNPTVEGDATANYIAEMCRQHNIKVSRIAHGIPVGGELETVDGTTLTHSFLGRRQID.

Residues 57–72 (CSQCRDFTEEDTCNIC) form a C4-type zinc finger. One can recognise a Toprim domain in the interval 81–176 (GLLCVVEMPA…KVSRIAHGIP (96 aa)).

Belongs to the RecR family.

In terms of biological role, may play a role in DNA repair. It seems to be involved in an RecBC-independent recombinational process of DNA repair. It may act with RecF and RecO. This is Recombination protein RecR from Haemophilus influenzae (strain 86-028NP).